Reading from the N-terminus, the 101-residue chain is Small ribosomal subunit protein uS14A (101 aa).

The interval 35–56 (TSSYEQRLDAQRALSRQPRDAS) is disordered.

This sequence belongs to the universal ribosomal protein uS14 family. In terms of assembly, part of the 30S ribosomal subunit. Contacts proteins S3 and S10.

Its function is as follows. Binds 16S rRNA, required for the assembly of 30S particles and may also be responsible for determining the conformation of the 16S rRNA at the A site. This is Small ribosomal subunit protein uS14A from Mycobacterium marinum (strain ATCC BAA-535 / M).